We begin with the raw amino-acid sequence, 497 residues long: MVLAQLGGSISRALAQMSNATVIDEKVLGECLNEISRALLQSDVQFKMVRDMQTNIRKIVNLETLAAGTNKRRIIQQAVFTELCNMLDPGKPAFTPKKGKPSVVMFVGLQGSGKTTTCTKYAYYHQRKGFKPSLVCADTFRAGAFDQLKQNATKAKIPFYGSYMESDPVKIAVEGLERFRKENSDLIIIDTSGRHKQEAALFEEMRQVAEATKPDLVIFVMDGSIGQAAFDQAQAFKQSASVGAVIITKLDGHAKGGGALSAVAATKSPVIFIGTGEHIDEFEIFDVKPFVSRLLGMGDLSGLMDKIQDVMPADQQPELLAKLAEGTFTLRLLYEQFQNLLKMGPIGQVFSMLPGFSSELMPKGHEKEGQAKIKRYMTIMDSMTAAELDSTNPKLMTESRIIRIARGSGRQIRDVTDMLEEYKRLAKMWSKMKGLKMPKNGKMSDLSQNLNIQQMTKALPPQVLKQMGGMGGLQALMKQMGGKDMSKMLGGMGLGGD.

Residues 1 to 295 (MVLAQLGGSI…DVKPFVSRLL (295 aa)) form a G-domain region. Residues 108-115 (GLQGSGKT), 190-194 (DTSGR), and 248-251 (TKLD) contribute to the GTP site. The M-domain stretch occupies residues 296–497 (GMGDLSGLMD…MLGGMGLGGD (202 aa)).

It belongs to the GTP-binding SRP family. SRP54 subfamily. In terms of assembly, component of a signal recognition particle (SRP) complex that consists of a 7SL RNA molecule of 300 nucleotides and six protein subunits: SRP72, SRP68, SRP54, SRP19, SRP14 and SRP9.

It is found in the cytoplasm. It localises to the endoplasmic reticulum. The catalysed reaction is GTP + H2O = GDP + phosphate + H(+). Functionally, component of the signal recognition particle (SRP) complex, a ribonucleoprotein complex that mediates the cotranslational targeting of secretory and membrane proteins to the endoplasmic reticulum (ER). As part of the SRP complex, associates with the SRP receptor (SR) component SRPRA to target secretory proteins to the endoplasmic reticulum membrane. Binds to the signal sequence of presecretory proteins when they emerge from the ribosomes. Displays basal GTPase activity, and stimulates reciprocal GTPase activation of the SR subunit SRPRA. Forms a guanosine 5'-triphosphate (GTP)-dependent complex with the SR subunit SRPRA. SR compaction and GTPase mediated rearrangement of SR drive SRP-mediated cotranslational protein translocation into the ER. Requires the presence of SRP9/SRP14 and/or SRP19 to stably interact with RNA. In Hordeum vulgare (Barley), this protein is Signal recognition particle subunit SRP54 2 (SRP54-2).